Here is a 419-residue protein sequence, read N- to C-terminus: Gamma-glutamyl phosphate reductase (419 aa).

Belongs to the gamma-glutamyl phosphate reductase family.

It is found in the cytoplasm. It carries out the reaction L-glutamate 5-semialdehyde + phosphate + NADP(+) = L-glutamyl 5-phosphate + NADPH + H(+). It functions in the pathway amino-acid biosynthesis; L-proline biosynthesis; L-glutamate 5-semialdehyde from L-glutamate: step 2/2. Catalyzes the NADPH-dependent reduction of L-glutamate 5-phosphate into L-glutamate 5-semialdehyde and phosphate. The product spontaneously undergoes cyclization to form 1-pyrroline-5-carboxylate. This Bordetella parapertussis (strain 12822 / ATCC BAA-587 / NCTC 13253) protein is Gamma-glutamyl phosphate reductase.